Consider the following 138-residue polypeptide: MPASSYFLLFFFMNFFSPAQSYLLTHCEPVNETVSVEKDGCPKCLAFQTSICSGHCFTKEPVYKSPFSSIYQHVCTYRDVRYETIRLPDCRPGVDPHVTYPVALSCECSLCTMDTSDCTIESLNPDFCMTQKEFILDY.

The first 21 residues, 1 to 21, serve as a signal peptide directing secretion; the sequence is MPASSYFLLFFFMNFFSPAQS. Cystine bridges form between Cys-27/Cys-75, Cys-41/Cys-90, Cys-44/Cys-128, Cys-52/Cys-106, Cys-56/Cys-108, and Cys-111/Cys-118. N-linked (GlcNAc...) asparagine glycosylation is present at Asn-31.

It belongs to the glycoprotein hormones subunit beta family. Heterodimer of an alpha and a beta chain.

The protein resides in the secreted. In terms of biological role, involved in gametogenesis and steroidogenesis. This chain is Gonadotropin subunit beta-2 (cgbb), found in Clarias gariepinus (North African catfish).